The following is a 172-amino-acid chain: MPNPRVFFDMSVGGQPAGRIVMELFADTTPRTAENFRALCTGEKGTGRSGKPLHYKDSSFHRVIPGFMCQGGDFTAGNGTGGESIYGAKFADENFIKKHTGPGILSMANAGPNTNGSQFFICTAKTEWLDGKHVVFGQVVEGMDVVKAIEKVGSSSGRTAKKVVVEDCGQLS.

One can recognise a PPIase cyclophilin-type domain in the interval 7–170 (FFDMSVGGQP…KKVVVEDCGQ (164 aa)).

This sequence belongs to the cyclophilin-type PPIase family. In terms of processing, not glycosylated. As to expression, expressed in pollen.

The protein localises to the cytoplasm. The catalysed reaction is [protein]-peptidylproline (omega=180) = [protein]-peptidylproline (omega=0). With respect to regulation, binds cyclosporin A (CsA). CsA mediates some of its effects via an inhibitory action on PPIase. PPIases accelerate the folding of proteins. It catalyzes the cis-trans isomerization of proline imidic peptide bonds in oligopeptides. This Catharanthus roseus (Madagascar periwinkle) protein is Peptidyl-prolyl cis-trans isomerase (PCKR1).